The primary structure comprises 334 residues: MDRTLIQEILEVVEQAAIASAKLTGCGLKNEADAAAVEAMRDRMGKINMRGRIVIGEGERDEAPMLYIGEEVGSGTGPGVDFAVDPCEGTNLCANSQRGSMAVLAASETGGLFNAPDFYMKKLAAPPAAKGKVDINKSATENINILSECLGIAVSDLVIVVMDRARHKDLIAEIRATGARVQPISDGDVQAAIACGFAGTGTHCLMGIGAAPEGVISAAALRALGGHFQGQLVYDPAVAQTKEWEGLTREGNLARLAEMGISDPDKVYEANELASGENVVFAGSGITDGLLFGGVKFESDCVRTSSLVISTLDNSARFTDTVHIKPGAQSIALR.

4 residues coordinate Mn(2+): Asp33, Glu57, Asp85, and Glu88. Residues 88-90 (EGT), Tyr119, 164-166 (RAR), and 186-188 (DGD) contribute to the substrate site. Glu213 contributes to the Mn(2+) binding site.

Belongs to the FBPase class 2 family. In terms of assembly, homotetramer. It depends on Mn(2+) as a cofactor.

The enzyme catalyses beta-D-fructose 1,6-bisphosphate + H2O = beta-D-fructose 6-phosphate + phosphate. It carries out the reaction D-sedoheptulose 1,7-bisphosphate + H2O = D-sedoheptulose 7-phosphate + phosphate. It participates in carbohydrate biosynthesis; Calvin cycle. Its function is as follows. Catalyzes the hydrolysis of fructose 1,6-bisphosphate (Fru 1,6-P2) and sedoheptulose 1,7-bisphosphate (Sed 1,7-P2) to fructose 6-phosphate and sedoheptulose 7-phosphate, respectively. The protein is D-fructose 1,6-bisphosphatase class 2/sedoheptulose 1,7-bisphosphatase of Synechococcus sp. (strain RCC307).